A 276-amino-acid chain; its full sequence is 2,3,4,5-tetrahydropyridine-2,6-dicarboxylate N-succinyltransferase (276 aa).

Residues Arg108 and Asp145 each contribute to the substrate site.

This sequence belongs to the transferase hexapeptide repeat family. Homotrimer.

It localises to the cytoplasm. The catalysed reaction is (S)-2,3,4,5-tetrahydrodipicolinate + succinyl-CoA + H2O = (S)-2-succinylamino-6-oxoheptanedioate + CoA. It functions in the pathway amino-acid biosynthesis; L-lysine biosynthesis via DAP pathway; LL-2,6-diaminopimelate from (S)-tetrahydrodipicolinate (succinylase route): step 1/3. The protein is 2,3,4,5-tetrahydropyridine-2,6-dicarboxylate N-succinyltransferase of Caulobacter vibrioides (strain ATCC 19089 / CIP 103742 / CB 15) (Caulobacter crescentus).